The primary structure comprises 131 residues: Large ribosomal subunit protein bL19 (131 aa).

Positions Arg111–Lys124 are enriched in basic and acidic residues. Residues Arg111–Glu131 are disordered.

Belongs to the bacterial ribosomal protein bL19 family.

Its function is as follows. This protein is located at the 30S-50S ribosomal subunit interface and may play a role in the structure and function of the aminoacyl-tRNA binding site. This is Large ribosomal subunit protein bL19 from Methylobacterium nodulans (strain LMG 21967 / CNCM I-2342 / ORS 2060).